A 432-amino-acid polypeptide reads, in one-letter code: CLOCK-interacting pacemaker (432 aa).

Disordered stretches follow at residues 71-98 (ADSD…SEDM) and 194-315 (SYTK…SSPL). Ser246 carries the post-translational modification Phosphoserine. Residues 272–283 (SPQTLQPVSSSH) are compositionally biased toward polar residues. Positions 364 to 395 (EITLKTKELIRQNQATQAELDQLKEQTQMFIE) form a coiled coil. A disordered region spans residues 408–432 (LQASLTSGSSHSGSDLDTLSDHPDV). Residues 411–424 (SLTSGSSHSGSDLD) show a composition bias toward low complexity.

Interacts with CLOCK. Forms a ternary complex with the CLOCK-BMAL1 heterodimer. Interacts with CAD and HSPA5. As to expression, expressed in the heart, kidney and liver and shows a circadian oscillation in these tissues with a peak at circadian time 14 hours (at protein level). Expressed in the brain, including the suprachiasmatic nucleus (SCN) of the brain, and in multiple peripheral tissues such as heart, liver and kidney. Exhibits a circadian oscillation in the peripheral tissues with a peak at circadian time 14 hours.

It is found in the nucleus. The protein resides in the cytoplasm. Its subcellular location is the cytosol. In terms of biological role, transcriptional repressor which may act as a negative-feedback regulator of CLOCK-BMAL1 transcriptional activity in the circadian-clock mechanism. May stimulate BMAL1-dependent phosphorylation of CLOCK. However, the physiological relevance of these observations is unsure, since experiments in knockout mice showed that CIPC is not critially required for basic circadian clock. The protein is CLOCK-interacting pacemaker (Cipc) of Mus musculus (Mouse).